A 39-amino-acid polypeptide reads, in one-letter code: Photosystem II reaction center protein L (39 aa).

Residues 18–38 (SLYLGLLSVLVLGILFSSYFF) form a helical membrane-spanning segment.

It belongs to the PsbL family. As to quaternary structure, PSII is composed of 1 copy each of membrane proteins PsbA, PsbB, PsbC, PsbD, PsbE, PsbF, PsbH, PsbI, PsbJ, PsbK, PsbL, PsbM, PsbT, PsbX, PsbY, Psb30/Ycf12, peripheral proteins PsbO, CyanoQ (PsbQ), PsbU, PsbV and a large number of cofactors. It forms dimeric complexes.

It is found in the cellular thylakoid membrane. In terms of biological role, one of the components of the core complex of photosystem II (PSII). PSII is a light-driven water:plastoquinone oxidoreductase that uses light energy to abstract electrons from H(2)O, generating O(2) and a proton gradient subsequently used for ATP formation. It consists of a core antenna complex that captures photons, and an electron transfer chain that converts photonic excitation into a charge separation. This subunit is found at the monomer-monomer interface and is required for correct PSII assembly and/or dimerization. The sequence is that of Photosystem II reaction center protein L from Prochlorococcus marinus subsp. pastoris (strain CCMP1986 / NIES-2087 / MED4).